A 595-amino-acid chain; its full sequence is Aspartate--tRNA(Asp/Asn) ligase (595 aa).

Residue E175 coordinates L-aspartate. Positions 199–202 (QQYK) are aspartate. The L-aspartate site is built by R221 and H454. 221–223 (RDE) is an ATP binding site. Position 488 (E488) interacts with ATP. R495 contributes to the L-aspartate binding site. An ATP-binding site is contributed by 540 to 543 (GIDR).

This sequence belongs to the class-II aminoacyl-tRNA synthetase family. Type 1 subfamily. In terms of assembly, homodimer.

The protein resides in the cytoplasm. The enzyme catalyses tRNA(Asx) + L-aspartate + ATP = L-aspartyl-tRNA(Asx) + AMP + diphosphate. Functionally, aspartyl-tRNA synthetase with relaxed tRNA specificity since it is able to aspartylate not only its cognate tRNA(Asp) but also tRNA(Asn). Reaction proceeds in two steps: L-aspartate is first activated by ATP to form Asp-AMP and then transferred to the acceptor end of tRNA(Asp/Asn). The protein is Aspartate--tRNA(Asp/Asn) ligase of Sinorhizobium fredii (strain NBRC 101917 / NGR234).